The following is a 440-amino-acid chain: RUN domain-containing protein 3A (440 aa).

Positions 52-184 constitute an RUN domain; sequence DDSSEEFVNF…IDFSFCLKGE (133 aa). Residues 213 to 233 are disordered; it reads DDRESVGGSSSEDSSPEHPYL. The stretch at 262–317 forms a coiled coil; it reads YLEELVRLRETQLKNLEAENKRLTQRISEQAEQSLQEKHQLEGVILELQEQLTGLL. Residues 374–402 are disordered; the sequence is LSSESQRLDGKQDGEPWGPIGKDPTPSML.

Belongs to the RUNDC3 family.

This Xenopus tropicalis (Western clawed frog) protein is RUN domain-containing protein 3A (rundc3a).